The following is a 63-amino-acid chain: Large ribosomal subunit protein uL30 (63 aa).

Belongs to the universal ribosomal protein uL30 family. Part of the 50S ribosomal subunit.

This is Large ribosomal subunit protein uL30 from Rickettsia typhi (strain ATCC VR-144 / Wilmington).